The following is a 570-amino-acid chain: Nucleoprotein (570 aa).

Positions 54 to 241 are binding site for the cap structure m7GTP; sequence MRKQKRDDGD…IDTKKSSLNI (188 aa). Residues Asp390 and Glu392 each contribute to the Mn(2+) site. Residues Glu400, Cys507, His510, and Cys530 each contribute to the Zn(2+) site. Asp534 serves as a coordination point for Mn(2+).

The protein belongs to the arenaviridae nucleocapsid protein family. As to quaternary structure, homomultimerizes to form the nucleocapsid. Binds to viral genomic RNA. Interacts with glycoprotein G2. Interacts with protein Z; this interaction probably directs the encapsidated genome to budding sites. Interacts with protein L; this interaction does not interfere with Z-L interaction. Interacts with host IKBKE (via Protein kinase domain); the interaction inhibits IKBKE kinase activity.

It localises to the virion. The protein localises to the host cytoplasm. Encapsidates the genome, protecting it from nucleases. The encapsidated genomic RNA is termed the nucleocapsid (NC). Serves as template for viral transcription and replication. The increased presence of protein N in host cell does not seem to trigger the switch from transcription to replication as observed in other negative strain RNA viruses. Through the interaction with host IKBKE, strongly inhibits the phosphorylation and nuclear translocation of host IRF3, a protein involved in interferon activation pathway, leading to the inhibition of interferon-beta and IRF3-dependent promoters activation. Also encodes a functional 3'-5' exoribonuclease that degrades preferentially dsRNA substrates and thereby participates in the suppression of interferon induction. In Homo sapiens (Human), this protein is Nucleoprotein.